A 117-amino-acid polypeptide reads, in one-letter code: Immunoglobulin heavy variable 4-28 (117 aa).

The signal sequence occupies residues 1-19 (MKHLWFFLLLVAAPRWVLS). Positions 20 to 44 (QVQLQESGPGLVKPSDTLSLTCAVS) are framework-1. The region spanning 20–117 (QVQLQESGPG…VDTAVYYCAR (98 aa)) is the Ig-like domain. A disulfide bridge connects residues cysteine 41 and cysteine 115. The segment at 45-53 (GYSISSSNW) is complementarity-determining-1. A framework-2 region spans residues 54-70 (WGWIRQPPGKGLEWIGY). Residues 71 to 77 (IYYSGST) are complementarity-determining-2. Positions 78 to 115 (YYNPSLKSRVTMSVDTSKNQFSLKLSSVTAVDTAVYYC) are framework-3. The interval 116–117 (AR) is complementarity-determining-3.

As to quaternary structure, immunoglobulins are composed of two identical heavy chains and two identical light chains; disulfide-linked.

It is found in the secreted. The protein localises to the cell membrane. Its function is as follows. V region of the variable domain of immunoglobulin heavy chains that participates in the antigen recognition. Immunoglobulins, also known as antibodies, are membrane-bound or secreted glycoproteins produced by B lymphocytes. In the recognition phase of humoral immunity, the membrane-bound immunoglobulins serve as receptors which, upon binding of a specific antigen, trigger the clonal expansion and differentiation of B lymphocytes into immunoglobulins-secreting plasma cells. Secreted immunoglobulins mediate the effector phase of humoral immunity, which results in the elimination of bound antigens. The antigen binding site is formed by the variable domain of one heavy chain, together with that of its associated light chain. Thus, each immunoglobulin has two antigen binding sites with remarkable affinity for a particular antigen. The variable domains are assembled by a process called V-(D)-J rearrangement and can then be subjected to somatic hypermutations which, after exposure to antigen and selection, allow affinity maturation for a particular antigen. This is Immunoglobulin heavy variable 4-28 from Homo sapiens (Human).